The following is a 944-amino-acid chain: Calcium-transporting ATPase type 2C member 2 (944 aa).

Topologically, residues 1–104 are cytoplasmic; it reads MGRRLKFLQK…DNAEPVWKKY (104 aa). An interaction with ORAI1 region spans residues 69–93; that stretch reads VDLDSGLSEFAVAQRRLVHGWNEFV. The chain crosses the membrane as a helical span at residues 105-125; the sequence is LDQFRNPLILLLLGSSVVSVL. Over 126–127 the chain is Extracellular; sequence TK. The helical transmembrane segment at 128–148 threads the bilayer; sequence EYEDAVSIALAVLIVVTVGFI. Residues 149 to 229 lie on the Cytoplasmic side of the membrane; the sequence is QEYRSEKSLE…EVEPCGKTDS (81 aa). A helical membrane pass occupies residues 230-250; the sequence is PLADGGDLSTLSNVVFMGTLV. Topologically, residues 251–291 are extracellular; it reads QCGKGQGVVIGTGEQSQFGEVFKMMRAEETPKTPLQKSMDK. Phosphothreonine is present on Thr262. Position 266 is a phosphoserine (Ser266). Residues 292–312 form a helical membrane-spanning segment; the sequence is LGKQLTIFSFGIIGLLMLVGW. Residues 313–329 lie on the Cytoplasmic side of the membrane; the sequence is VQGKPFLSMFTVGVSLA. The Ca(2+) site is built by Val330, Ala331, Ile333, and Glu335. A helical membrane pass occupies residues 330–350; the sequence is VAAIPEGLPIVVMVTLVLGVL. Topologically, residues 351 to 748 are extracellular; that stretch reads RMAKKRVIVK…IAALSLITLS (398 aa). Asp377 serves as the catalytic 4-aspartylphosphate intermediate. The Mg(2+) site is built by Asp672 and Asp676. Residues 749 to 769 form a helical membrane-spanning segment; it reads TVCNLPSPLNAMQILWVNIIM. Positions 766 and 770 each coordinate Ca(2+). The Cytoplasmic portion of the chain corresponds to 770-802; that stretch reads DGPPAQSLGVEPVDRDALRRPPRSVGDTILNRA. The helical transmembrane segment at 803 to 823 threads the bilayer; sequence LILRVLMSAAVIIGGTLFIFW. Residues 824–835 are Extracellular-facing; sequence REIPANGTSTPR. Residues 836–853 traverse the membrane as a helical segment; that stretch reads TTTMAFTCFVFFDLFNAL. Residues 854–872 are Cytoplasmic-facing; it reads SCRSQTKLIFEIGFFRNRM. The chain crosses the membrane as a helical span at residues 873–893; sequence FLYSVLGSLLGQLAVIYAPPL. The Extracellular segment spans residues 894 to 903; that stretch reads QKVFQTENLS. A helical membrane pass occupies residues 904–924; it reads ALDLLLLTGLASSVFILSELL. The Cytoplasmic segment spans residues 925–944; the sequence is KLWEKFLSRARPTQMLPEAV.

This sequence belongs to the cation transport ATPase (P-type) (TC 3.A.3) family. Type IIA subfamily. In terms of assembly, interacts (via N-terminus) with ORAI1 (via N- and C-termini); this interaction regulates Ca(2+) influx at the plasma membrane. Expressed in hippocampal neurons (at protein level). Expressed in lactating mammary epithelium (at protein level).

It is found in the golgi apparatus. It localises to the trans-Golgi network membrane. The protein localises to the cell membrane. Its subcellular location is the basolateral cell membrane. The catalysed reaction is Ca(2+)(in) + ATP + H2O = Ca(2+)(out) + ADP + phosphate + H(+). The enzyme catalyses Mn(2+)(in) + ATP + H2O = Mn(2+)(out) + ADP + phosphate + H(+). Functionally, ATP-driven pump that supplies the Golgi apparatus with Ca(2+) and Mn(2+) ions, both essential cofactors for processing and trafficking of newly synthesized proteins in the secretory pathway. Within a catalytic cycle, acquires Ca(2+) or Mn(2+) ions on the cytoplasmic side of the membrane and delivers them to the lumenal side. The transfer of ions across the membrane is coupled to ATP hydrolysis and is associated with a transient phosphorylation that shifts the pump conformation from inward-facing to outward-facing state. Induces Ca(2+) influx independently of its ATP-driven pump function. At the basolateral membrane of mammary epithelial cells, interacts with Ca(2+) channel ORAI1 and mediates Ca(2+) entry independently of the Ca(2+) content of endoplasmic reticulum or Golgi stores. May facilitate transepithelial transport of large quantities of Ca(2+) for milk secretion via activation of Ca(2+) influx channels at the plasma membrane and active Ca(2+) transport at the Golgi apparatus. The protein is Calcium-transporting ATPase type 2C member 2 of Mus musculus (Mouse).